Reading from the N-terminus, the 359-residue chain is MAP kinase-activated protein kinase 2 (359 aa).

The Protein kinase domain occupies 20–281; that stretch reads VTSNTVLGYG…IQDVISNKWI (262 aa). Residues 26–34 and Lys49 contribute to the ATP site; that span reads LGYGINGKV. Asp142 acts as the Proton acceptor in catalysis.

It belongs to the protein kinase superfamily. CAMK Ser/Thr protein kinase family. Post-translationally, phosphorylated and activated by MAP kinase.

The enzyme catalyses L-seryl-[protein] + ATP = O-phospho-L-seryl-[protein] + ADP + H(+). It catalyses the reaction L-threonyl-[protein] + ATP = O-phospho-L-threonyl-[protein] + ADP + H(+). Functionally, its physiological substrate seems to be the small heat shock protein (HSP27/HSP25). This Drosophila melanogaster (Fruit fly) protein is MAP kinase-activated protein kinase 2 (MAPk-Ak2).